The chain runs to 355 residues: Beta-1,2-mannobiose phosphorylase (355 aa).

Beta-D-Manp-(1-&gt;2)-beta-D-Manp-(1-&gt;2)-D-Manp-binding positions include N31, R46, R89, 140–141 (ED), K188, Y273, and D333.

The protein belongs to the glycosyl hydrolase 130 family. In terms of assembly, homodimer.

The catalysed reaction is beta-D-mannopyranosyl-(1-&gt;2)-D-mannopyranose + phosphate = alpha-D-mannose 1-phosphate + D-mannose. Functionally, catalyzes the reversible phosphorolysis of 1,2-beta-oligomannan. In phosphorolytic reactions, prefers beta-1,2-mannobiose (beta-1,2-Man2) as substrate, but can also use beta-1,2-mannotriose. This chain is Beta-1,2-mannobiose phosphorylase, found in Listeria innocua serovar 6a (strain ATCC BAA-680 / CLIP 11262).